Here is a 301-residue protein sequence, read N- to C-terminus: Mitochondrial import receptor subunit TOM40 homolog (301 aa).

The segment at 1–20 is disordered; sequence MATPTESEFAAPIPQTNPGS.

The protein belongs to the Tom40 family. In terms of assembly, forms part of the preprotein translocase complex of the outer mitochondrial membrane (TOM complex). Interacts with mitochondrial targeting sequences.

The protein resides in the mitochondrion outer membrane. In terms of biological role, channel-forming protein essential for import of protein precursors into mitochondria. Specifically required for nnt-1 accumulation in the mitochondria and may be involved in the secretion of daf-28/insulin from the mitochondria. Required for embryonic and larval development. The sequence is that of Mitochondrial import receptor subunit TOM40 homolog from Caenorhabditis briggsae.